The chain runs to 131 residues: Putative pre-16S rRNA nuclease (131 aa).

Belongs to the YqgF nuclease family.

Its subcellular location is the cytoplasm. Could be a nuclease involved in processing of the 5'-end of pre-16S rRNA. This is Putative pre-16S rRNA nuclease from Bordetella avium (strain 197N).